Consider the following 1639-residue polypeptide: RIMS-binding protein 3B (1639 aa).

Disordered regions lie at residues 1–22 (MAKD…SSPA), 215–240 (GSPD…CHAP), and 295–364 (SLDS…LTPS). A coiled-coil region spans residues 21–143 (PAAAVLENQR…ELQRQLAEEL (123 aa)). The segment covering 326-339 (SPPPSPLPPPPPPS) has biased composition (pro residues). Coiled-coil stretches lie at residues 409 to 442 (QADE…QETN) and 480 to 619 (LAKD…AEEN). A disordered region spans residues 697-811 (CRPGHPPEQP…DRDTASEVDD (115 aa)). Polar residues-rich tracts occupy residues 707–718 (WETSQMPESQVK) and 761–775 (SVPQ…SQPL). Residues 776-790 (SKKTSSQSNSSSEGS) are compositionally biased toward low complexity. The SH3 1 domain maps to 832–899 (PKLKIFMAQY…PSNFVEQIPD (68 aa)). Fibronectin type-III domains are found at residues 995-1083 (APMQ…TLLA) and 1088-1184 (PPLE…IPED). Disordered regions lie at residues 1251-1273 (PRRQ…GAGS), 1292-1325 (QKSP…SPAP), and 1392-1413 (GTER…QALG). The segment covering 1293–1305 (KSPQNHRPPSVSD) has biased composition (polar residues). The segment covering 1392-1406 (GTERREERREPEPHS) has biased composition (basic and acidic residues). SH3 domains are found at residues 1452-1520 (TPAR…EMEV) and 1569-1636 (WTPK…HMSL).

Belongs to the RIMBP family. As to quaternary structure, interacts with LRGUK (via guanylate kinase-like domain). Interacts (via C-terminus) with HOOK1 (via coiled-coil region).

The protein resides in the cytoplasm. It localises to the cytoskeleton. Its function is as follows. Probable component of the manchette, a microtubule-based structure which plays a key role in sperm head morphogenesis during late stages of sperm development. The protein is RIMS-binding protein 3B (RIMBP3B) of Homo sapiens (Human).